We begin with the raw amino-acid sequence, 512 residues long: Protein spinster homolog 3 (512 aa).

The segment at 1 to 30 is disordered; sequence MAGGMSAECPEPGPGGLQGQSPGPGRQCPP. 12 helical membrane passes run 50 to 70, 84 to 104, 112 to 132, 145 to 165, 173 to 193, 204 to 224, 260 to 280, 309 to 329, 343 to 365, 377 to 397, 411 to 431, and 450 to 470; these read VLCYINLLNYMNWFIIAGVLL, GLLQTVFVSCLLLSAPVFGYL, ATMSFGILLWSGAGLSSSFIS, IVGTGSASYSTIAPTVLGDLF, VLAVFYIFIPVGSGLGYVLGS, WALRVMPCLEAVALILLILLV, FVWSTLGVTAMAFVTGALGFW, LIFGALTIMTGVIGVILGAEA, LICASSLLATAPCLYLALVLAPT, GELLLSCNWAVVADILLSVVV, VGHILGDAGSPYLTGLISSVL, and FLCCAFVIALGGGCFLLTALY. The segment at 481–512 is disordered; it reads PVTGTPDSNDVDSNDLERQGLLSGAGASTEEP.

It belongs to the major facilitator superfamily. Spinster (TC 2.A.1.49) family.

The protein localises to the membrane. Functionally, sphingolipid transporter. This chain is Protein spinster homolog 3 (SPNS3), found in Homo sapiens (Human).